Reading from the N-terminus, the 2670-residue chain is Inositol 1,4,5-trisphosphate-gated calcium channel ITPR3 (2670 aa).

Residues 1–2201 (MNEMSSFLHI…LIYWFSRRMT (2201 aa)) are Cytoplasmic-facing. 5 MIR domains span residues 113–173 (GDVV…LRSN), 174–224 (GDNV…INLF), 232–288 (EEVL…VEVV), 295–372 (GGAG…LDPT), and 378–434 (DSFV…IVSV). The 1D-myo-inositol 1,4,5-trisphosphate site is built by Arg-266, Thr-268, Leu-269, and Arg-270. Positions 321-344 (PSYKGDVSDPKAAGPGAQSRTGRR) are disordered. Positions 503, 507, 510, 567, 568, and 569 each coordinate 1D-myo-inositol 1,4,5-trisphosphate. Arg-743 is a Ca(2+) binding site. Residues Ser-916 and Ser-934 each carry the phosphoserine modification. Ca(2+) is bound by residues Glu-1122 and Glu-1125. Over residues 1134–1153 (VKGEEGEAGASKDKKERPSD) the composition is skewed to basic and acidic residues. Disordered stretches follow at residues 1134–1164 (VKGEEGEAGASKDKKERPSDEEGFLQPHGEK) and 1807–1849 (NMSD…GLHR). 3 positions are modified to phosphoserine: Ser-1813, Ser-1832, and Ser-1834. Residues 1831-1842 (SSFSMPSSSRYS) are compositionally biased toward low complexity. The Ca(2+) site is built by Glu-1881 and Glu-1945. 3 residues coordinate ATP: Ala-1995, Glu-2148, and Lys-2151. A helical transmembrane segment spans residues 2202 to 2222 (LWGSISFNLAVFINIIIAFFY). Residues 2223-2233 (PYVEGASTGVL) lie on the Extracellular side of the membrane. Residues 2234-2254 (GSPLISLLFWILICFSIAALF) form a helical membrane-spanning segment. The Cytoplasmic segment spans residues 2255–2263 (TKHYSVRPL). A helical transmembrane segment spans residues 2264–2284 (IVALVLRSIYYLGIGPTLNIL). The Extracellular segment spans residues 2285 to 2324 (GALNLTNKIVFVVSFVGNRGTFIRGYKAMVMDMEFLYHVG). Residues 2325–2345 (YILTSVLGLFAHELFYSILLF) traverse the membrane as a helical segment. The Cytoplasmic portion of the chain corresponds to 2346–2367 (DLIYREETLFNVIKSVTRNGRS). Residues 2368 to 2388 (ILLTALLALILVYLFSIVGFL) form a helical membrane-spanning segment. Topologically, residues 2389–2495 (FLKDDFILEV…ESLFPARVVY (107 aa)) are extracellular. Cys-2454 and Cys-2460 form a disulfide bridge. A helical membrane pass occupies residues 2496-2516 (DLLFFFIVIIIVLNLIFGVII). The Cytoplasmic segment spans residues 2517 to 2670 (DTFADLRSEK…FVDVQNCMSR (154 aa)). Cys-2537 and Phe-2538 together coordinate ATP. Cys-2537 contacts Zn(2+). Residues Cys-2540 and His-2557 each contribute to the Zn(2+) site. Positions 2559, 2562, 2563, and 2564 each coordinate ATP. His-2562 contacts Zn(2+). Thr-2580 contacts Ca(2+). Phosphoserine occurs at positions 2608 and 2669.

Belongs to the InsP3 receptor family. Homotetramer. Homodimer. Interacts with TRPC1 and TRPC3. Interacts with TRPC4. Interacts with TRPV4. Interacts with SIGMAR1. Interacts with AKT1 and PML. Interacts with IRAG2 (via coiled-coil domain). Interacts with CABP1. Interacts with TMBIM4/LFG4. Interacts with CEMIP. Interacts with TESPA1. Interacts with TMEM203. Interacts with BOK; regulates ITPR3 expression. Interacts with BCL2L10. Interacts with CHGA and CHGB. Phosphorylated by AKT1 on serine and/or threonine residues.

The protein localises to the endoplasmic reticulum membrane. Its subcellular location is the cytoplasmic vesicle. It is found in the secretory vesicle membrane. It carries out the reaction Ca(2+)(in) = Ca(2+)(out). Its activity is regulated as follows. Inositol 1,4,5-trisphosphate-gated calcium channel is regulated by cytosolic calcium in a biphasic manner. At low concentrations, cytosolic calcium binds at a high-affinity juxtamembrane domain (JD) calcium binding site, allowing ITPR3 to activate by escaping a low-energy resting state through an ensemble of preactivated states. At high cytosolic calcium concentrations, ITPR3 preferentially enters an inhibited state stabilized by calcium binding at a second, low-affinity cytoplasmic domain (CD) calcium binding site. Its function is as follows. Inositol 1,4,5-trisphosphate-gated calcium channel that, upon 1D-myo-inositol 1,4,5-trisphosphate binding, transports calcium from the endoplasmic reticulum lumen to cytoplasm, thus releasing the intracellular calcium and therefore participates in cellular calcium ion homeostasis. 11D-myo-inositol 1,4,5-trisphosphate binds to the ligand-free channel without altering its global conformation, yielding the low-energy resting state, then progresses through resting-to preactivated transitions to the higher energy preactivated state, which increases affinity for calcium, promoting binding of the low basal cytosolic calcium at the juxtamembrane domain (JD) site, favoring the transition through the ensemble of high-energy intermediate states along the trajectory to the fully-open activated state. Upon opening, releases calcium in the cytosol where it can bind to the low-affinity cytoplasmic domain (CD) site and stabilizes the inhibited state to terminate calcium release. The polypeptide is Inositol 1,4,5-trisphosphate-gated calcium channel ITPR3 (Rattus norvegicus (Rat)).